The sequence spans 79 residues: Translation initiation factor IF-1, chloroplastic (79 aa).

One can recognise an S1-like domain in the interval 1–74 (MTRKNIDLIE…HRGRITFRLR (74 aa)).

Belongs to the IF-1 family. In terms of assembly, component of the 30S ribosomal translation pre-initiation complex which assembles on the 30S ribosome in the order IF-2 and IF-3, IF-1 and N-formylmethionyl-tRNA(fMet); mRNA recruitment can occur at any time during PIC assembly.

It is found in the plastid. Its subcellular location is the chloroplast. Its function is as follows. One of the essential components for the initiation of protein synthesis. Stabilizes the binding of IF-2 and IF-3 on the 30S subunit to which N-formylmethionyl-tRNA(fMet) subsequently binds. Helps modulate mRNA selection, yielding the 30S pre-initiation complex (PIC). Upon addition of the 50S ribosomal subunit IF-1, IF-2 and IF-3 are released leaving the mature 70S translation initiation complex. The sequence is that of Translation initiation factor IF-1, chloroplastic from Chlorella vulgaris (Green alga).